Reading from the N-terminus, the 398-residue chain is Bifunctional enzyme IspD/IspF (398 aa).

A 2-C-methyl-D-erythritol 4-phosphate cytidylyltransferase region spans residues 1 to 234 (MSNSKRTAAI…SRLGALLGDI (234 aa)). The segment at 235 to 398 (RTGTGYDVHA…LPWGTNGLAD (164 aa)) is 2-C-methyl-D-erythritol 2,4-cyclodiphosphate synthase. 2 residues coordinate a divalent metal cation: Asp241 and His243. 4-CDP-2-C-methyl-D-erythritol 2-phosphate is bound by residues 241-243 (DVH) and 267-268 (HS). His275 contributes to the a divalent metal cation binding site. 4-CDP-2-C-methyl-D-erythritol 2-phosphate contacts are provided by residues 289–291 (DIG), 365–368 (TTSE), Phe372, and Arg375.

In the N-terminal section; belongs to the IspD/TarI cytidylyltransferase family. IspD subfamily. The protein in the C-terminal section; belongs to the IspF family. It depends on a divalent metal cation as a cofactor.

It carries out the reaction 2-C-methyl-D-erythritol 4-phosphate + CTP + H(+) = 4-CDP-2-C-methyl-D-erythritol + diphosphate. It catalyses the reaction 4-CDP-2-C-methyl-D-erythritol 2-phosphate = 2-C-methyl-D-erythritol 2,4-cyclic diphosphate + CMP. Its pathway is isoprenoid biosynthesis; isopentenyl diphosphate biosynthesis via DXP pathway; isopentenyl diphosphate from 1-deoxy-D-xylulose 5-phosphate: step 2/6. It participates in isoprenoid biosynthesis; isopentenyl diphosphate biosynthesis via DXP pathway; isopentenyl diphosphate from 1-deoxy-D-xylulose 5-phosphate: step 4/6. Functionally, bifunctional enzyme that catalyzes the formation of 4-diphosphocytidyl-2-C-methyl-D-erythritol from CTP and 2-C-methyl-D-erythritol 4-phosphate (MEP) (IspD), and catalyzes the conversion of 4-diphosphocytidyl-2-C-methyl-D-erythritol 2-phosphate (CDP-ME2P) to 2-C-methyl-D-erythritol 2,4-cyclodiphosphate (ME-CPP) with a corresponding release of cytidine 5-monophosphate (CMP) (IspF). The sequence is that of Bifunctional enzyme IspD/IspF from Rhodopseudomonas palustris (strain BisB18).